Reading from the N-terminus, the 416-residue chain is Serine--tRNA ligase (416 aa).

Residue 232 to 234 (TAE) participates in L-serine binding. 263–265 (RKE) provides a ligand contact to ATP. Glu-286 is an L-serine binding site. 350–353 (EISS) provides a ligand contact to ATP. L-serine is bound at residue Ser-384.

It belongs to the class-II aminoacyl-tRNA synthetase family. Type-1 seryl-tRNA synthetase subfamily. As to quaternary structure, homodimer. The tRNA molecule binds across the dimer.

The protein resides in the cytoplasm. The enzyme catalyses tRNA(Ser) + L-serine + ATP = L-seryl-tRNA(Ser) + AMP + diphosphate + H(+). The catalysed reaction is tRNA(Sec) + L-serine + ATP = L-seryl-tRNA(Sec) + AMP + diphosphate + H(+). It functions in the pathway aminoacyl-tRNA biosynthesis; selenocysteinyl-tRNA(Sec) biosynthesis; L-seryl-tRNA(Sec) from L-serine and tRNA(Sec): step 1/1. In terms of biological role, catalyzes the attachment of serine to tRNA(Ser). Is also able to aminoacylate tRNA(Sec) with serine, to form the misacylated tRNA L-seryl-tRNA(Sec), which will be further converted into selenocysteinyl-tRNA(Sec). In Nautilia profundicola (strain ATCC BAA-1463 / DSM 18972 / AmH), this protein is Serine--tRNA ligase.